Consider the following 433-residue polypeptide: MTDILNYTKSEEIFSAAQQLMPGGVSSPVRAFKSVGGQPIVFDRVKGPFAWDIDGNRYIDYIGSWGPAICGHAHPEVTTALQEAIEKGTSFGAPCVLENKLAEMVIDAVPSVEMVRFVNSGTEACMAVLRLMRAFTGRDKVIKFDGCYHGHADMFLVKAGSGVATLGLPDSPGVPRTTTANTLTAPYNDLEAVKKLFSENPDAISGVILEPIVGNAGFITPEPGFLEGLRELTTENGSLLVFDEVMTGFRISYGGAQEKFGVTPDLTTLGKVIGGGLPVGAYGGKKEIMSMVAPSGPVYQAGTLSGNPLAMTAGIKTLELLKQDGTYDKLDLITSRLIEGIIQSAENNGIAINGGSVSAMFGFFLCDGPVRNFNEAKTNDAELFGKLHKEMLRRGIYLAPSPFEAGFTSLAHSEEEIDKTIEAFDESFNAIKK.

Residue Lys271 is modified to N6-(pyridoxal phosphate)lysine.

It belongs to the class-III pyridoxal-phosphate-dependent aminotransferase family. HemL subfamily. As to quaternary structure, homodimer. The cofactor is pyridoxal 5'-phosphate.

The protein localises to the cytoplasm. It carries out the reaction (S)-4-amino-5-oxopentanoate = 5-aminolevulinate. Its pathway is porphyrin-containing compound metabolism; protoporphyrin-IX biosynthesis; 5-aminolevulinate from L-glutamyl-tRNA(Glu): step 2/2. It participates in porphyrin-containing compound metabolism; chlorophyll biosynthesis. The protein is Glutamate-1-semialdehyde 2,1-aminomutase of Prochlorococcus marinus (strain AS9601).